Consider the following 159-residue polypeptide: Transcription elongation factor GreA (159 aa).

It belongs to the GreA/GreB family.

Necessary for efficient RNA polymerase transcription elongation past template-encoded arresting sites. The arresting sites in DNA have the property of trapping a certain fraction of elongating RNA polymerases that pass through, resulting in locked ternary complexes. Cleavage of the nascent transcript by cleavage factors such as GreA or GreB allows the resumption of elongation from the new 3'terminus. GreA releases sequences of 2 to 3 nucleotides. In Buchnera aphidicola subsp. Acyrthosiphon pisum (strain APS) (Acyrthosiphon pisum symbiotic bacterium), this protein is Transcription elongation factor GreA.